Here is a 298-residue protein sequence, read N- to C-terminus: UDP-3-O-acyl-N-acetylglucosamine deacetylase (298 aa).

H75, H232, and D236 together coordinate Zn(2+). H259 acts as the Proton donor in catalysis.

The protein belongs to the LpxC family. It depends on Zn(2+) as a cofactor.

It catalyses the reaction a UDP-3-O-[(3R)-3-hydroxyacyl]-N-acetyl-alpha-D-glucosamine + H2O = a UDP-3-O-[(3R)-3-hydroxyacyl]-alpha-D-glucosamine + acetate. The protein operates within glycolipid biosynthesis; lipid IV(A) biosynthesis; lipid IV(A) from (3R)-3-hydroxytetradecanoyl-[acyl-carrier-protein] and UDP-N-acetyl-alpha-D-glucosamine: step 2/6. In terms of biological role, catalyzes the hydrolysis of UDP-3-O-myristoyl-N-acetylglucosamine to form UDP-3-O-myristoylglucosamine and acetate, the committed step in lipid A biosynthesis. This is UDP-3-O-acyl-N-acetylglucosamine deacetylase from Nitratiruptor sp. (strain SB155-2).